Consider the following 366-residue polypeptide: Terpene synthase 4 (366 aa).

Residues 91 to 96 (DDFLER) carry the DDxx(x)D/E motif motif. Residues 241-249 (NDCVSYAKE) carry the NDxxSxxxD/E motif motif.

The protein belongs to the terpene synthase family.

The catalysed reaction is (2E,6E)-farnesyl diphosphate = (1S,2S,4R)-beta-elemene + diphosphate. Its function is as follows. Terpene synthase that converts its substrate farnesyl diphosphate (FPP) into the sesquiterpenes bicycloelemene, beta-elemene and 2 yet unidentified sesquiterpenes. The polypeptide is Terpene synthase 4 (Dictyostelium purpureum (Slime mold)).